Consider the following 354-residue polypeptide: Uroporphyrinogen decarboxylase (354 aa).

Residues 27–31, aspartate 77, tyrosine 154, threonine 209, and histidine 327 contribute to the substrate site; that span reads RQAGR.

Belongs to the uroporphyrinogen decarboxylase family. As to quaternary structure, homodimer.

It is found in the cytoplasm. It catalyses the reaction uroporphyrinogen III + 4 H(+) = coproporphyrinogen III + 4 CO2. Its pathway is porphyrin-containing compound metabolism; protoporphyrin-IX biosynthesis; coproporphyrinogen-III from 5-aminolevulinate: step 4/4. Its function is as follows. Catalyzes the decarboxylation of four acetate groups of uroporphyrinogen-III to yield coproporphyrinogen-III. The polypeptide is Uroporphyrinogen decarboxylase (Actinobacillus pleuropneumoniae serotype 5b (strain L20)).